The primary structure comprises 368 residues: MTTAPLILLAAGGTGGHLFPAEALGVELMKRGLRVRLVTDSRALRYSGLFSKDLTDVVPSETVRGRSPWALARTGLMLAAGTAVALNLMRVLKPAAVVGFGGYPTLPPLIAARLRGIPTVIHDSNAVMGRANSFLSKRVNAIATSLPGVLDKKPSLAGKITTTGTPMRPAILAAAAVPFATPGLGDPLRVLVVGGSQGARVMSDIVPGAIERLEPALRQRLILTQQVRDEDMARVRGFYDRLEIKAELAPFFADLPARLASNHIIISRSGAGTVAELGAIGRPSILVPLPGAIDQDQFANAGVLADVGGAIRIVQPDFTPDRLAAELSALAAGPARLAAMATAARTVGRLDAAGRLADLVMRVARTGA.

UDP-N-acetyl-alpha-D-glucosamine contacts are provided by residues 14–16 (TGG), Asn125, Arg168, Ser196, and Gln297.

This sequence belongs to the glycosyltransferase 28 family. MurG subfamily.

Its subcellular location is the cell inner membrane. The enzyme catalyses di-trans,octa-cis-undecaprenyl diphospho-N-acetyl-alpha-D-muramoyl-L-alanyl-D-glutamyl-meso-2,6-diaminopimeloyl-D-alanyl-D-alanine + UDP-N-acetyl-alpha-D-glucosamine = di-trans,octa-cis-undecaprenyl diphospho-[N-acetyl-alpha-D-glucosaminyl-(1-&gt;4)]-N-acetyl-alpha-D-muramoyl-L-alanyl-D-glutamyl-meso-2,6-diaminopimeloyl-D-alanyl-D-alanine + UDP + H(+). Its pathway is cell wall biogenesis; peptidoglycan biosynthesis. Functionally, cell wall formation. Catalyzes the transfer of a GlcNAc subunit on undecaprenyl-pyrophosphoryl-MurNAc-pentapeptide (lipid intermediate I) to form undecaprenyl-pyrophosphoryl-MurNAc-(pentapeptide)GlcNAc (lipid intermediate II). This Nitrobacter winogradskyi (strain ATCC 25391 / DSM 10237 / CIP 104748 / NCIMB 11846 / Nb-255) protein is UDP-N-acetylglucosamine--N-acetylmuramyl-(pentapeptide) pyrophosphoryl-undecaprenol N-acetylglucosamine transferase.